A 524-amino-acid polypeptide reads, in one-letter code: Glutamyl-tRNA(Gln) amidotransferase subunit A (524 aa).

Active-site charge relay system residues include Lys-109 and Ser-184. The active-site Acyl-ester intermediate is Ser-208.

The protein belongs to the amidase family. GatA subfamily. As to quaternary structure, heterotrimer of A, B and C subunits.

The enzyme catalyses L-glutamyl-tRNA(Gln) + L-glutamine + ATP + H2O = L-glutaminyl-tRNA(Gln) + L-glutamate + ADP + phosphate + H(+). Allows the formation of correctly charged Gln-tRNA(Gln) through the transamidation of misacylated Glu-tRNA(Gln) in organisms which lack glutaminyl-tRNA synthetase. The reaction takes place in the presence of glutamine and ATP through an activated gamma-phospho-Glu-tRNA(Gln). This is Glutamyl-tRNA(Gln) amidotransferase subunit A from Tropheryma whipplei (strain Twist) (Whipple's bacillus).